A 260-amino-acid chain; its full sequence is tRNA pseudouridine synthase C (260 aa).

Asp54 is a catalytic residue.

Belongs to the pseudouridine synthase RluA family.

The catalysed reaction is uridine(65) in tRNA = pseudouridine(65) in tRNA. Functionally, responsible for synthesis of pseudouridine from uracil-65 in transfer RNAs. The protein is tRNA pseudouridine synthase C (truC) of Escherichia coli (strain K12).